The sequence spans 154 residues: Lipoprotein signal peptidase (154 aa).

2 helical membrane passes run 52-72 (ILAG…IGIV) and 85-105 (LGVA…DRAV). Residues D111 and D129 contribute to the active site. The chain crosses the membrane as a helical span at residues 124-144 (IFNIADSSLCVGVMLLFIQML).

It belongs to the peptidase A8 family.

Its subcellular location is the cell membrane. The enzyme catalyses Release of signal peptides from bacterial membrane prolipoproteins. Hydrolyzes -Xaa-Yaa-Zaa-|-(S,diacylglyceryl)Cys-, in which Xaa is hydrophobic (preferably Leu), and Yaa (Ala or Ser) and Zaa (Gly or Ala) have small, neutral side chains.. It participates in protein modification; lipoprotein biosynthesis (signal peptide cleavage). Its function is as follows. This protein specifically catalyzes the removal of signal peptides from prolipoproteins. The chain is Lipoprotein signal peptidase from Bacillus subtilis (strain 168).